A 441-amino-acid polypeptide reads, in one-letter code: Serine/threonine-protein phosphatase 4 regulatory subunit 2 (441 aa).

The segment covering 201 to 213 has biased composition (acidic residues); sequence DEEEGFFDGDEDR. Disordered stretches follow at residues 201–220, 242–348, and 364–418; these read DEEEGFFDGDEDREMGNKSK, INDD…LTTP, and SPSS…SQED. Positions 249-261 are enriched in polar residues; sequence NKGQNCQSDVTKN. The segment covering 264–302 has biased composition (acidic residues); it reads DDEDDDDNDDDYREDGADEDDEDDDHMGSTDDDEDDDED. Phosphothreonine is present on Thr347. Residues 388-398 are compositionally biased toward basic and acidic residues; it reads EDAHENHEGRS.

This sequence belongs to the PPP4R2 family. As to quaternary structure, regulatory subunit (R2) of the histone H2A phosphatase complex (HTP-C) consisting of PPH3, PSY2 and PSY4. Interacts with SPT4 and SPT5.

It is found in the nucleus. Regulatory subunit of the histone H2A phosphatase complex, which dephosphorylates H2AS128ph (gamma-H2A) that has been displaced from sites of DNA lesions in the double-stranded DNA break repair process. Dephosphorylation is necessary for efficient recovery from the DNA damage checkpoint. This Saccharomyces cerevisiae (strain ATCC 204508 / S288c) (Baker's yeast) protein is Serine/threonine-protein phosphatase 4 regulatory subunit 2 (PSY4).